The chain runs to 116 residues: Putative pterin-4-alpha-carbinolamine dehydratase (116 aa).

The protein belongs to the pterin-4-alpha-carbinolamine dehydratase family.

The catalysed reaction is (4aS,6R)-4a-hydroxy-L-erythro-5,6,7,8-tetrahydrobiopterin = (6R)-L-erythro-6,7-dihydrobiopterin + H2O. The polypeptide is Putative pterin-4-alpha-carbinolamine dehydratase (Stenotrophomonas maltophilia (strain K279a)).